The sequence spans 216 residues: Inner membrane assembly complex subunit 22 (216 aa).

Residues 1–26 constitute a mitochondrion transit peptide; that stretch reads MFMARQVLRNGLFLRSLAPIKITART. The Mitochondrial matrix portion of the chain corresponds to 27 to 43; that stretch reads VASANAGIKRKSRFDKT. Residues 44–63 form a helical membrane-spanning segment; that stretch reads MIKPLLLVMIFGSILNAVIA. The stretch at 64 to 93 forms a coiled coil; sequence EKRNIIDMERKYKLKLDKLKELIRRVHDNN. The Mitochondrial intermembrane segment spans residues 64-216; the sequence is EKRNIIDMER…KEHDKIPKFL (153 aa).

As to quaternary structure, component of the inner membrane assembly (INA) complex, composed of INA17 and INA22. Interacts with a subset of F(1)F(0)-ATP synthase subunits of the F(1)-domain and the peripheral stalk.

The protein resides in the mitochondrion inner membrane. Its function is as follows. Component of the INA complex (INAC) that promotes the biogenesis of mitochondrial F(1)F(0)-ATP synthase. INAC facilitates the assembly of the peripheral stalk and promotes the assembly of the catalytic F(1)-domain with the membrane-embedded F(0)-domain. The polypeptide is Inner membrane assembly complex subunit 22 (Saccharomyces cerevisiae (strain ATCC 204508 / S288c) (Baker's yeast)).